The chain runs to 1728 residues: Protein NETWORKED 1A (1728 aa).

One can recognise an NAB domain in the interval 13 to 92; that stretch reads YSWWWDSHIP…ERYDHATVEL (80 aa). Coiled-coil stretches lie at residues 155–446, 476–827, 857–885, 954–1016, 1090–1323, 1403–1431, and 1576–1684; these read LGNS…LEIE, MLRD…QVEI, FSEKLIAELESENLEQQMEAEFLVHEIDN, QFQS…AELQ, EQAE…KETV, LLQDMKTRIKTIKQAVAEEKKRRGKLRRR, and RRLA…TKSK. Positions 1419-1441 are disordered; that stretch reads AEEKKRRGKLRRRSSSHRSKDRK. A compositionally biased stretch (basic residues) spans 1424-1439; sequence RRGKLRRRSSSHRSKD.

The protein belongs to the NET family. As to quaternary structure, interacts with F-actin. As to expression, expressed in root meristems and at very low levels throughout mature vasculature.

Its subcellular location is the cytoplasm. The protein resides in the cytoskeleton. It localises to the cell membrane. It is found in the cell junction. The protein localises to the plasmodesma. Plant-specific actin binding protein. Associates with F-actin at the plasma membrane and plasmodesmata. May be part of a membrane-cytoskeletal adapter complex. The sequence is that of Protein NETWORKED 1A from Arabidopsis thaliana (Mouse-ear cress).